Reading from the N-terminus, the 219-residue chain is Mediator of RNA polymerase II transcription subunit 18 (219 aa).

Belongs to the Mediator complex subunit 18 family. Component of the Mediator complex. Interacts with YY1 to suppress disease susceptibility via the repression of genes glutaredoxins GRX480, GRXS13 and thioredoxin TRX-h5. Binds to ABI4 to regulate abscisic acid responses; recruited by ABI4 to ABI5 promoter in the presence of abscisic acid (ABA). Interacts with SUF4 to regulate flowering time; recruited by SUF4 to FLC promoter.

The protein resides in the nucleus. In terms of biological role, component of the Mediator complex, a coactivator involved in the regulated transcription of nearly all RNA polymerase II-dependent genes. Mediator functions as a bridge to convey information from gene-specific regulatory proteins to the basal RNA polymerase II transcription machinery. The Mediator complex, having a compact conformation in its free form, is recruited to promoters by direct interactions with regulatory proteins and serves for the assembly of a functional pre-initiation complex with RNA polymerase II and the general transcription factors. Involved in the regulation of histone H3 lysine tri-methylation (H3K36me3). Associates with the promoter, coding and terminator regions of target genes suggesting its function in transcription initiation, elongation and termination. Multifunctional protein which regulates plant immunity, especially during necrotrophic fungal infection (e.g. B.cinerea and A.brassicicola), flowering time and responses to hormones (e.g. abscisic acid ABA and ethylene) through interactions with distinct transcription factors. The polypeptide is Mediator of RNA polymerase II transcription subunit 18 (Arabidopsis thaliana (Mouse-ear cress)).